The chain runs to 90 residues: uncharacterized protein (90 aa).

This is an uncharacterized protein from Escherichia coli (strain K12).